The primary structure comprises 161 residues: ATP synthase subunit b (161 aa).

Residues 11–31 (AISFVLFVWFCMKYIWPPIIL) traverse the membrane as a helical segment.

The protein belongs to the ATPase B chain family. In terms of assembly, F-type ATPases have 2 components, F(1) - the catalytic core - and F(0) - the membrane proton channel. F(1) has five subunits: alpha(3), beta(3), gamma(1), delta(1), epsilon(1). F(0) has three main subunits: a(1), b(2) and c(10-14). The alpha and beta chains form an alternating ring which encloses part of the gamma chain. F(1) is attached to F(0) by a central stalk formed by the gamma and epsilon chains, while a peripheral stalk is formed by the delta and b chains.

It is found in the cell membrane. Its function is as follows. F(1)F(0) ATP synthase produces ATP from ADP in the presence of a proton or sodium gradient. F-type ATPases consist of two structural domains, F(1) containing the extramembraneous catalytic core and F(0) containing the membrane proton channel, linked together by a central stalk and a peripheral stalk. During catalysis, ATP synthesis in the catalytic domain of F(1) is coupled via a rotary mechanism of the central stalk subunits to proton translocation. In terms of biological role, component of the F(0) channel, it forms part of the peripheral stalk, linking F(1) to F(0). The protein is ATP synthase subunit b of Buchnera aphidicola subsp. Acyrthosiphon pisum (strain APS) (Acyrthosiphon pisum symbiotic bacterium).